The following is a 121-amino-acid chain: Small ribosomal subunit protein uS13 (121 aa).

The interval Arg93–Lys121 is disordered. Residues Ala106–Lys121 show a composition bias toward basic residues.

Belongs to the universal ribosomal protein uS13 family. As to quaternary structure, part of the 30S ribosomal subunit. Forms a loose heterodimer with protein S19. Forms two bridges to the 50S subunit in the 70S ribosome.

Located at the top of the head of the 30S subunit, it contacts several helices of the 16S rRNA. In the 70S ribosome it contacts the 23S rRNA (bridge B1a) and protein L5 of the 50S subunit (bridge B1b), connecting the 2 subunits; these bridges are implicated in subunit movement. Contacts the tRNAs in the A and P-sites. The polypeptide is Small ribosomal subunit protein uS13 (Streptococcus uberis (strain ATCC BAA-854 / 0140J)).